Consider the following 1051-residue polypeptide: MSSAVEPPPPPPPESAPSKPSAAGAGGSSSGNKGGPEGGAAPAAPCAAGSGPADTEMEEVFDHGSPGKQKEIQEPDPTYEEKMQTDRANRFEYLLKQTELFAHFIQPAAQKTPTSPLKMKPGRPRVKKDEKQNLLSVGDYRHRRTEQEEDEELLTESSKATNVCTRFEDSPSYVKWGKLRDYQVRGLNWLISLYENGINGILADEMGLGKTLQTISLLGYMKHYRNIPGPHMVLVPKSTLHNWMSEFKKWVPTLRSVCLIGDKEQRAAFVRDVLLPGEWDVCVTSYEMLIKEKSVFKKFNWRYLVIDEAHRIKNEKSKLSEIVREFKTTNRLLLTGTPLQNNLHELWSLLNFLLPDVFNSADDFDSWFDTNNCLGDQKLVERLHMVLRPFLLRRIKADVEKSLPPKKEVKIYVGLSKMQREWYTRILMKDIDILNSAGKMDKMRLLNILMQLRKCCNHPYLFDGAEPGPPYTTDMHLVTNSGKMVVLDKLLPKLKEQGSRVLIFSQMTRVLDILEDYCMWRNYEYCRLDGQTPHDERQDSINAYNEPNSTKFVFMLSTRAGGLGINLATADVVILYDSDWNPQVDLQAMDRAHRIGQTKTVRVFRFITDNTVEERIVERAEMKLRLDSIVIQQGRLVDQNLNKIGKDEMLQMIRHGATHVFASKESEITDEDIDGILERGAKKTAEMNEKLSKMGESSLRNFTMDTESSVYNFEGEDYREKQKIAFTEWIEPPKRERKANYAVDAYFREALRVSEPKAPKAPRPPKQPNVQDFQFFPPRLFELLEKEILYYRKTIGYKVPRSPDLPNAAQAQKEEQLKIDEAEPLNDEELEEKEKLLTQGFTNWNKRDFNQFIKANEKWGRDDIENIAREVEGKTPEEVIEYSAVFWERCNELQDIEKIMAQIERGEARIQRRISIKKALDTKIGRYKAPFHQLRISYGTNKGKNYTEEEDRFLICMLHKLGFDKENVYDELRQCIRNSPQFRFDWFLKSRTAMELQRRCNTLITLIERENMELEEKEKAEKKKRGPKPSTQKRKMDGAPDGRGRKKKLKL.

The segment covering 1 to 15 (MSSAVEPPPPPPPES) has biased composition (pro residues). Positions 1–81 (MSSAVEPPPP…IQEPDPTYEE (81 aa)) are disordered. S2 carries the post-translational modification N-acetylserine. Over residues 24 to 38 (GAGGSSSGNKGGPEG) the composition is skewed to gly residues. Positions 39–53 (GAAPAAPCAAGSGPA) are enriched in low complexity. T55 carries the post-translational modification Phosphothreonine. S65 is subject to Phosphoserine. The span at 68-81 (KQKEIQEPDPTYEE) shows a compositional bias: basic and acidic residues. A Glycyl lysine isopeptide (Lys-Gly) (interchain with G-Cter in SUMO2) cross-link involves residue K82. T112 carries the phosphothreonine modification. Phosphoserine occurs at positions 115, 136, and 170. The Helicase ATP-binding domain occupies 191 to 356 (ISLYENGING…WSLLNFLLPD (166 aa)). An ATP-binding site is contributed by 204–211 (DEMGLGKT). The DEAH box motif lies at 307–310 (DEAH). K439 carries the post-translational modification N6-acetyllysine. The Helicase C-terminal domain maps to 486–637 (VLDKLLPKLK…SIVIQQGRLV (152 aa)). Residues K643, K646, K693, K721, and K734 each participate in a glycyl lysine isopeptide (Lys-Gly) (interchain with G-Cter in SUMO2) cross-link. S754 is subject to Phosphoserine. 2 SANT domains span residues 839–891 (QGFT…ERCN) and 942–1006 (KGKN…LITL). A Glycyl lysine isopeptide (Lys-Gly) (interchain with G-Cter in SUMO2) cross-link involves residue K965. The tract at residues 1014 to 1051 (LEEKEKAEKKKRGPKPSTQKRKMDGAPDGRGRKKKLKL) is disordered. A compositionally biased stretch (basic residues) spans 1022–1033 (KKKRGPKPSTQK). The span at 1034-1043 (RKMDGAPDGR) shows a compositional bias: basic and acidic residues.

The protein belongs to the SNF2/RAD54 helicase family. ISWI subfamily. As to quaternary structure, component of the ACF-5 ISWI chromatin-remodeling complex (also called the ACF/WCRF complex) at least composed of SMARCA5/SNF2H and BAZ1A/ACF1, which regulates the spacing of histone octamers on the DNA template to facilitate access to DNA. Within the complex interacts with BAZ1A/ACF1; the interaction is direct and is required to slide nucleosomes from end to center positions on a DNA template in an ATP-dependent manner. Component of the CHRAC ISWI chromatin-remodeling complex at least composed of SMARCA5/SNF2H, BAZ1A/ACF1, CHRAC1 and POLE3; the complex preferentially binds DNA through the CHRAC1-POLE3 heterodimer and possesses ATP-dependent nucleosome-remodeling activity. Within the complex interacts with BAZ1A/ACF1; the interaction is direct and promotes the interaction with the POLE3-CHRAC1 heterodimer. Within the complex interacts with the POLE3-CHRAC1 heterodimer; the interaction is direct and enhances nucleosome sliding activity by the SMARCA5/SNF2H and BAZ1A/ACF1 interaction. Neither POLE3 nor CHRAC1 enhances nucleosome sliding activity of the ACF-5 ISWI chromatin remodeling complex. Component of the WICH-5 ISWI chromatin-remodeling complex (also called the WICH complex) at least composed of SMARCA5/SNF2H and BAZ1B/WSTF, which regulates the spacing of histone octamers on the DNA template to facilitate access to DNA. Within the complex interacts with BAZ1B/WSTF. Component of the NoRC-5 ISWI chromatin-remodeling complex (also called the NoRC chromatin-remodeling complex) at least composed of SMARCA5/SNF2H and BAZ2A/TIP5; the complex suppresses rDNA transcription by a combination of nucleosome remodeling, histone deacetylation, and DNA methylation. Within the complex interacts with BAZ2A/TIP5. Within the complex interacts with HDAC1. Component of the BRF-5 ISWI chromatin-remodeling complex at least composed of SMARCA5/SNF2H and BAZ2B. Within the complex interacts with BAZ2B. Component of the NURF-5 ISWI chromatin-remodeling complex at least composed of SMARCA5/SNF2H and BPTF. Within the complex interacts with BPFT. Component of the CERF-5 ISWI chromatin-remodeling complex at least composed of SMARCA5/SNF2H and CECR2. LUZP1 is detected as part of the CERF-5 complex in embryonic stem cells where it is involved in complex stabilization but is not detected in the complex in the testis. Component of the RSF-5 ISWI chromatin-remodeling complex (also called the RSF complex) at least composed of SMARCA5/SNF2H and RSF1. Within the complex interacts with RSF1. Interacts with the cohesin complex component RAD21; the interaction is direct. Interacts with the NuRD complex components HDAC2, RBBP4 and CHD4; the interactions are direct. Interacts with PCNA. Component of the B-WICH complex, at least composed of SMARCA5/SNF2H, BAZ1B/WSTF, SF3B1, DEK, MYO1C, ERCC6, MYBBP1A and DDX21 which positively regulates RNA polymerase III transcription. Interacts with MYO1C. Interacts with BEND3. Interacts with SIRT6; promoting recruitment to DNA damage sites. As to expression, ubiquitously expressed.

The protein localises to the nucleus. It is found in the chromosome. The catalysed reaction is ATP + H2O = ADP + phosphate + H(+). Functionally, ATPase that possesses intrinsic ATP-dependent nucleosome-remodeling activity. Catalytic subunit of ISWI chromatin-remodeling complexes, which form ordered nucleosome arrays on chromatin and facilitate access to DNA during DNA-templated processes such as DNA replication, transcription, and repair; this may require intact histone H4 tails. Within the ISWI chromatin-remodeling complexes, slides edge- and center-positioned histone octamers away from their original location on the DNA template. Catalytic activity and histone octamer sliding propensity is regulated and determined by components of the ISWI chromatin-remodeling complexes. The BAZ1A/ACF1-, BAZ1B/WSTF-, BAZ2A/TIP5- and BAZ2B-containing ISWI chromatin-remodeling complexes regulate the spacing of nucleosomes along the chromatin and have the ability to slide mononucleosomes to the center of a DNA template in an ATP-dependent manner. The CECR2- and RSF1-containing ISWI chromatin-remodeling complexes do not have the ability to slide mononucleosomes to the center of a DNA template. Binds to core histones together with RSF1, and is required for the assembly of regular nucleosome arrays by the RSF-5 ISWI chromatin-remodeling complex. Involved in DNA replication and together with BAZ1A/ACF1 is required for replication of pericentric heterochromatin in S-phase. Probably plays a role in repression of RNA polymerase I dependent transcription of the rDNA locus, through the recruitment of the SIN3/HDAC1 corepressor complex to the rDNA promoter. The WICH-5 ISWI chromatin-remodeling complex regulates the transcription of various genes, has a role in RNA polymerase I and RNA polymerase III transcription, mediates the histone H2AX phosphorylation at 'Tyr-142', and is involved in the maintenance of chromatin structures during DNA replication processes. Essential component of the NoRC-5 ISWI chromatin-remodeling complex, a complex that mediates silencing of a fraction of rDNA by recruiting histone-modifying enzymes and DNA methyltransferases, leading to heterochromatin formation and transcriptional silencing. Required for embryonic development and differentiation, and the proliferation of early blastocyst-derived stem cells. The sequence is that of SWI/SNF-related matrix-associated actin-dependent regulator of chromatin subfamily A member 5 (Smarca5) from Mus musculus (Mouse).